The following is a 404-amino-acid chain: Cysteine desulfurase IscS (404 aa).

Pyridoxal 5'-phosphate-binding positions include A75–T76, N155, Q183, and S203–H205. K206 is subject to N6-(pyridoxal phosphate)lysine. Position 243 (T243) interacts with pyridoxal 5'-phosphate. The Cysteine persulfide intermediate role is filled by C328. [2Fe-2S] cluster is bound at residue C328.

This sequence belongs to the class-V pyridoxal-phosphate-dependent aminotransferase family. NifS/IscS subfamily. In terms of assembly, homodimer. Forms a heterotetramer with IscU, interacts with other sulfur acceptors. It depends on pyridoxal 5'-phosphate as a cofactor.

Its subcellular location is the cytoplasm. The catalysed reaction is (sulfur carrier)-H + L-cysteine = (sulfur carrier)-SH + L-alanine. The protein operates within cofactor biosynthesis; iron-sulfur cluster biosynthesis. In terms of biological role, master enzyme that delivers sulfur to a number of partners involved in Fe-S cluster assembly, tRNA modification or cofactor biosynthesis. Catalyzes the removal of elemental sulfur atoms from cysteine to produce alanine. Functions as a sulfur delivery protein for Fe-S cluster synthesis onto IscU, an Fe-S scaffold assembly protein, as well as other S acceptor proteins. The protein is Cysteine desulfurase IscS of Shewanella amazonensis (strain ATCC BAA-1098 / SB2B).